Here is a 144-residue protein sequence, read N- to C-terminus: 3-dehydroquinate dehydratase (144 aa).

The active-site Proton acceptor is the Tyr24. Residues Asn73, His79, and Asp86 each coordinate substrate. His99 (proton donor) is an active-site residue. Substrate is bound by residues 100–101 and Arg110; that span reads LS.

Belongs to the type-II 3-dehydroquinase family. In terms of assembly, homododecamer.

It carries out the reaction 3-dehydroquinate = 3-dehydroshikimate + H2O. Its pathway is metabolic intermediate biosynthesis; chorismate biosynthesis; chorismate from D-erythrose 4-phosphate and phosphoenolpyruvate: step 3/7. Functionally, catalyzes a trans-dehydration via an enolate intermediate. In Shewanella sp. (strain ANA-3), this protein is 3-dehydroquinate dehydratase.